The primary structure comprises 364 residues: Monocarboxylate 2-oxoacid-binding periplasmic protein all3028 (364 aa).

The signal sequence occupies residues 1 to 26 (MKRREVLNTAAIATATTALVSCTQTN). Substrate contacts are provided by residues 103-104 (YY), Gln160, and Arg181. Gln160 provides a ligand contact to Na(+). Residues Glu218, Trp219, and Glu244 each coordinate Na(+).

Belongs to the bacterial solute-binding protein 7 family. As to quaternary structure, homodimer. The complex comprises the extracytoplasmic solute receptor protein all3028, and the two putative transmembrane proteins alr3026 and alr3027.

It is found in the periplasm. Pyruvate uptake inhibited by 2-oxobutyrate, 2-oxovalerate, 2-oxoisovalerate, 2-oxoisocaproate and 2-oxo-3-methylvalerate. In terms of biological role, part of the tripartite ATP-independent periplasmic (TRAP) transport system involved in the uptake of monocarboxylate 2-oxoacids. This protein specifically binds monocarboxylate 2-oxoacids including pyruvate, 2-oxobutyrate, 2-oxovalerate, 2-oxoisovalerate, 2-oxoisocaproate and 2-oxo-3-methylvalerate. Is not able to bind mannitol. The polypeptide is Monocarboxylate 2-oxoacid-binding periplasmic protein all3028 (Nostoc sp. (strain PCC 7120 / SAG 25.82 / UTEX 2576)).